Here is a 186-residue protein sequence, read N- to C-terminus: Elongation factor P (186 aa).

It belongs to the elongation factor P family.

Its subcellular location is the cytoplasm. The protein operates within protein biosynthesis; polypeptide chain elongation. Involved in peptide bond synthesis. Stimulates efficient translation and peptide-bond synthesis on native or reconstituted 70S ribosomes in vitro. Probably functions indirectly by altering the affinity of the ribosome for aminoacyl-tRNA, thus increasing their reactivity as acceptors for peptidyl transferase. This chain is Elongation factor P, found in Beutenbergia cavernae (strain ATCC BAA-8 / DSM 12333 / CCUG 43141 / JCM 11478 / NBRC 16432 / NCIMB 13614 / HKI 0122).